Consider the following 133-residue polypeptide: Protein NrdI (133 aa).

This sequence belongs to the NrdI family.

Its function is as follows. Probably involved in ribonucleotide reductase function. This Cronobacter sakazakii (strain ATCC BAA-894) (Enterobacter sakazakii) protein is Protein NrdI.